The primary structure comprises 160 residues: Protein-export protein SecB (160 aa).

This sequence belongs to the SecB family. Homotetramer, a dimer of dimers. One homotetramer interacts with 1 SecA dimer.

Its subcellular location is the cytoplasm. One of the proteins required for the normal export of preproteins out of the cell cytoplasm. It is a molecular chaperone that binds to a subset of precursor proteins, maintaining them in a translocation-competent state. It also specifically binds to its receptor SecA. The chain is Protein-export protein SecB from Rhodospirillum rubrum (strain ATCC 11170 / ATH 1.1.1 / DSM 467 / LMG 4362 / NCIMB 8255 / S1).